The sequence spans 246 residues: Putative L,D-transpeptidase YafK (246 aa).

The first 19 residues, 1–19, serve as a signal peptide directing secretion; sequence MRKIALILAMLLIPCVSFA. The 131-residue stretch at 44-174 folds into the L,D-TPase catalytic domain; the sequence is VYIQIFKEER…GQPSVQVSIY (131 aa). His135 serves as the catalytic Proton donor/acceptor. The active-site Nucleophile is the Cys143.

It belongs to the YkuD family.

It participates in cell wall biogenesis; peptidoglycan biosynthesis. The polypeptide is Putative L,D-transpeptidase YafK (yafK) (Escherichia coli O157:H7).